Here is a 246-residue protein sequence, read N- to C-terminus: Uridylate kinase (246 aa).

Lys20–Gly23 lines the ATP pocket. Positions Gly28–Gly33 are involved in allosteric activation by GTP. Gly62 contacts UMP. ATP contacts are provided by Gly63 and Arg67. Residues Asp82 and Thr143–Thr150 contribute to the UMP site. ATP-binding residues include Thr170, Tyr176, and Asp179.

Belongs to the UMP kinase family. Homohexamer.

The protein resides in the cytoplasm. The enzyme catalyses UMP + ATP = UDP + ADP. It functions in the pathway pyrimidine metabolism; CTP biosynthesis via de novo pathway; UDP from UMP (UMPK route): step 1/1. With respect to regulation, allosterically activated by GTP. Inhibited by UTP. In terms of biological role, catalyzes the reversible phosphorylation of UMP to UDP. The sequence is that of Uridylate kinase from Cereibacter sphaeroides (strain ATCC 17023 / DSM 158 / JCM 6121 / CCUG 31486 / LMG 2827 / NBRC 12203 / NCIMB 8253 / ATH 2.4.1.) (Rhodobacter sphaeroides).